Reading from the N-terminus, the 30-residue chain is DCPSDWSPYEGHCYRVFTEPQNWADAEKFC.

An intrachain disulfide couples cysteine 2 to cysteine 13. Positions 9–30 (YEGHCYRVFTEPQNWADAEKFC) constitute a C-type lectin domain.

The protein belongs to the snaclec family. In terms of assembly, heterodimer of subunits A and B; disulfide-linked. Glycosylated. In terms of tissue distribution, expressed by the venom gland.

It localises to the secreted. Functionally, anticoagulant protein which binds to the gamma-carboxyglutamic acid-domain regions of factors IX (F9) and factor X (F10) in the presence of calcium with a 1 to 1 stoichiometry. The polypeptide is Snaclec coagulation factor IX/factor X-binding protein subunit B (Bothrops jararaca (Jararaca)).